Reading from the N-terminus, the 76-residue chain is uncharacterized protein (76 aa).

This is an uncharacterized protein from Sulfolobus islandicus filamentous virus (isolate Iceland/Hveragerdi) (SIFV).